Consider the following 142-residue polypeptide: Interleukin-3 (142 aa).

A signal peptide spans 1–18 (MSHLPILLLLLLVSPGLQ). The N-linked (GlcNAc...) asparagine glycan is linked to Asn-33. Cysteines 34 and 102 form a disulfide.

It belongs to the IL-3 family. Monomer. As to expression, activated T-cells, mast cells, natural killer cells.

The protein localises to the secreted. In terms of biological role, granulocyte/macrophage colony-stimulating factors are cytokines that act in hematopoiesis by controlling the production, differentiation, and function of 2 related white cell populations of the blood, the granulocytes and the monocytes-macrophages. This CSF induces granulocytes, macrophages, mast cells, stem cells, erythroid cells, eosinophils and megakaryocytes. The sequence is that of Interleukin-3 (IL3) from Callithrix jacchus (White-tufted-ear marmoset).